We begin with the raw amino-acid sequence, 357 residues long: UDP-N-acetylglucosamine--N-acetylmuramyl-(pentapeptide) pyrophosphoryl-undecaprenol N-acetylglucosamine transferase (357 aa).

UDP-N-acetyl-alpha-D-glucosamine is bound by residues 13 to 15, N125, R161, S189, I243, and Q288; that span reads TGG.

This sequence belongs to the glycosyltransferase 28 family. MurG subfamily.

The protein localises to the cell inner membrane. It carries out the reaction di-trans,octa-cis-undecaprenyl diphospho-N-acetyl-alpha-D-muramoyl-L-alanyl-D-glutamyl-meso-2,6-diaminopimeloyl-D-alanyl-D-alanine + UDP-N-acetyl-alpha-D-glucosamine = di-trans,octa-cis-undecaprenyl diphospho-[N-acetyl-alpha-D-glucosaminyl-(1-&gt;4)]-N-acetyl-alpha-D-muramoyl-L-alanyl-D-glutamyl-meso-2,6-diaminopimeloyl-D-alanyl-D-alanine + UDP + H(+). The protein operates within cell wall biogenesis; peptidoglycan biosynthesis. In terms of biological role, cell wall formation. Catalyzes the transfer of a GlcNAc subunit on undecaprenyl-pyrophosphoryl-MurNAc-pentapeptide (lipid intermediate I) to form undecaprenyl-pyrophosphoryl-MurNAc-(pentapeptide)GlcNAc (lipid intermediate II). In Bordetella parapertussis (strain 12822 / ATCC BAA-587 / NCTC 13253), this protein is UDP-N-acetylglucosamine--N-acetylmuramyl-(pentapeptide) pyrophosphoryl-undecaprenol N-acetylglucosamine transferase.